The primary structure comprises 487 residues: Serine/threonine-protein kinase 4 (487 aa).

M1 bears the N-acetylmethionine mark. A Phosphothreonine modification is found at T3. A Protein kinase domain is found at 30-281; sequence FDVLEKLGEG…ATQLLQHPFV (252 aa). ATP contacts are provided by residues 36–44 and K59; that span reads LGEGSYGSV. The active-site Proton acceptor is D149. T183 carries the post-translational modification Phosphothreonine; by autocatalysis. S265 carries the post-translational modification Phosphoserine. Residues 290–310 are a coiled coil; it reads LRDLINEAMDVKLKRQESQQR. Basic and acidic residues predominate over residues 303–312; that stretch reads KRQESQQREV. Positions 303–332 are disordered; it reads KRQESQQREVDQDDEENSEEDEMDSGTMVR. Residues 313-326 show a composition bias toward acidic residues; sequence DQDDEENSEEDEMD. The residue at position 320 (S320) is a Phosphoserine. T340 and T367 each carry phosphothreonine. The residue at position 387 (T387) is a Phosphothreonine; by PKB/AKT1. A phosphoserine mark is found at S410 and S414. Position 433 is a phosphotyrosine (Y433). The SARAH domain occupies 433–480; the sequence is YEFLKSWTVEDLQKRLLALDPMMEQEIEEIRQKYQSKRQPILDAIEAK.

It belongs to the protein kinase superfamily. STE Ser/Thr protein kinase family. STE20 subfamily. Homodimer; mediated via the coiled-coil region. Interacts with NORE1, which inhibits autoactivation. Interacts with and stabilizes SAV1. Interacts with RASSF1. Interacts with FOXO3. Interacts with RASSF2 (via SARAH domain). Interacts with AR, PKB/AKT1, TNNI3 and SIRT1. Interacts with DLG5 (via PDZ domain 3). Interacts with MARK3 and SCRIB in the presence of DLG5. Mg(2+) serves as cofactor. In terms of processing, autophosphorylated on serine and threonine residues. Phosphorylation at Thr-387 by PKB/AKT1, leads to inhibition of its: kinase activity, nuclear translocation and autophosphorylation at Thr-183. It also diminishes its cleavage by caspases and its ability to phosphorylate FOXO3. Post-translationally, proteolytically cleaved by caspase-3 during apoptosis at Asp-326 and Asp-349 resulting in a 37 kDa or a 39 kDa subunit respectively. The 39 kDa subunit is further cleaved into the 37 kDa form. Proteolytic cleavage results in kinase activation and nuclear translocation of the truncated form (MST1/N). It is less likely that cleavage at Asp-349 is a prerequisite for activation as this site is not conserved in the murine ortholog.

The protein resides in the cytoplasm. The protein localises to the nucleus. The enzyme catalyses L-seryl-[protein] + ATP = O-phospho-L-seryl-[protein] + ADP + H(+). The catalysed reaction is L-threonyl-[protein] + ATP = O-phospho-L-threonyl-[protein] + ADP + H(+). Its activity is regulated as follows. Inhibited by the C-terminal non-catalytic region. Activated by caspase-cleavage. Full activation also requires homodimerization and autophosphorylation of Thr-183. Activated by RASSF1 which acts by preventing its dephosphorylation. In terms of biological role, stress-activated, pro-apoptotic kinase which, following caspase-cleavage, enters the nucleus and induces chromatin condensation followed by internucleosomal DNA fragmentation. Key component of the Hippo signaling pathway which plays a pivotal role in organ size control and tumor suppression by restricting proliferation and promoting apoptosis. The core of this pathway is composed of a kinase cascade wherein STK3/MST2 and STK4/MST1, in complex with its regulatory protein SAV1, phosphorylates and activates LATS1/2 in complex with its regulatory protein MOB1, which in turn phosphorylates and inactivates YAP1 oncoprotein and WWTR1/TAZ. Phosphorylation of YAP1 by LATS2 inhibits its translocation into the nucleus to regulate cellular genes important for cell proliferation, cell death, and cell migration. STK3/MST2 and STK4/MST1 are required to repress proliferation of mature hepatocytes, to prevent activation of facultative adult liver stem cells (oval cells), and to inhibit tumor formation. Phosphorylates 'Ser-14' of histone H2B (H2BS14ph) during apoptosis. Phosphorylates FOXO3 upon oxidative stress, which results in its nuclear translocation and cell death initiation. Phosphorylates MOBKL1A, MOBKL1B and RASSF2. Phosphorylates TNNI3 (cardiac Tn-I) and alters its binding affinity to TNNC1 (cardiac Tn-C) and TNNT2 (cardiac Tn-T). Phosphorylates FOXO1 on 'Ser-212' and regulates its activation and stimulates transcription of PMAIP1 in a FOXO1-dependent manner. Phosphorylates SIRT1 and inhibits SIRT1-mediated p53/TP53 deacetylation, thereby promoting p53/TP53 dependent transcription and apoptosis upon DNA damage. Acts as an inhibitor of PKB/AKT1. Phosphorylates AR on 'Ser-650' and suppresses its activity by intersecting with PKB/AKT1 signaling and antagonizing formation of AR-chromatin complexes. The protein is Serine/threonine-protein kinase 4 (STK4) of Chlorocebus aethiops (Green monkey).